A 303-amino-acid polypeptide reads, in one-letter code: MNDIILKSLSTLITEQRNPNSVDIDRQSTLEIVRLMNEEDKLVPLAIESCLPQISLAVEQIVQAFQQGGRLIYIGAGTSGRLGVLDASECPPTFGVSTEMVKGIIAGGECAIRHPVEGAEDNTKAVLNDLQSIHFSKNDVLVGIAASGRTPYVIAGLQYAKSLGALTISIASNPKSEMAEIADIAIETIVGPEILTGSSRLKSGTAQKMVLNMLTTASMILLGKCYENLMVDVQASNEKLKARAVRIVMQATDCNKTLAEQTLLEADQNAKLAIMMILSTLSKSEAKVLLERHQGKLRNALSK.

An SIS domain is found at 61–224 (IVQAFQQGGR…TTASMILLGK (164 aa)). Glu89 acts as the Proton donor in catalysis. The active site involves Glu120.

The protein belongs to the GCKR-like family. MurNAc-6-P etherase subfamily. As to quaternary structure, homodimer.

It carries out the reaction N-acetyl-D-muramate 6-phosphate + H2O = N-acetyl-D-glucosamine 6-phosphate + (R)-lactate. It participates in amino-sugar metabolism; 1,6-anhydro-N-acetylmuramate degradation. It functions in the pathway amino-sugar metabolism; N-acetylmuramate degradation. Its pathway is cell wall biogenesis; peptidoglycan recycling. Its function is as follows. Specifically catalyzes the cleavage of the D-lactyl ether substituent of MurNAc 6-phosphate, producing GlcNAc 6-phosphate and D-lactate. Together with AnmK, is also required for the utilization of anhydro-N-acetylmuramic acid (anhMurNAc) either imported from the medium or derived from its own cell wall murein, and thus plays a role in cell wall recycling. The chain is N-acetylmuramic acid 6-phosphate etherase (murQ) from Haemophilus influenzae (strain ATCC 51907 / DSM 11121 / KW20 / Rd).